The chain runs to 441 residues: Deoxyguanosinetriphosphate triphosphohydrolase-like protein (441 aa).

One can recognise an HD domain in the interval 59 to 250 (RLTHSLEVSQ…MELADDTAYA (192 aa)).

It belongs to the dGTPase family. Type 2 subfamily.

This is Deoxyguanosinetriphosphate triphosphohydrolase-like protein from Shewanella loihica (strain ATCC BAA-1088 / PV-4).